The primary structure comprises 673 residues: tRNA uridine 5-carboxymethylaminomethyl modification enzyme MnmG (673 aa).

17-22 is a binding site for FAD; sequence GGGHAG. 284–298 lines the NAD(+) pocket; sequence GPRYCPSVEDKINRF.

The protein belongs to the MnmG family. As to quaternary structure, homodimer. Heterotetramer of two MnmE and two MnmG subunits. FAD serves as cofactor.

Its subcellular location is the cytoplasm. Functionally, NAD-binding protein involved in the addition of a carboxymethylaminomethyl (cmnm) group at the wobble position (U34) of certain tRNAs, forming tRNA-cmnm(5)s(2)U34. The polypeptide is tRNA uridine 5-carboxymethylaminomethyl modification enzyme MnmG (Polaromonas sp. (strain JS666 / ATCC BAA-500)).